The sequence spans 823 residues: Protein phosphatase 1 regulatory subunit 29 (823 aa).

The first 22 residues, 1-22 (MLRLGLCAAALLCVCQPGAVRA), serve as a signal peptide directing secretion. The Extracellular segment spans residues 23–397 (DCWLIEGDKG…APSTSTTTHY (375 aa)). N-linked (GlcNAc...) asparagine glycosylation occurs at asparagine 54. 5 LRR repeats span residues 56 to 77 (TVHD…SLNR), 80 to 101 (NLTD…AFLG), 104 to 125 (SLQV…MLRG), 128 to 149 (RLQF…AFSE), and 152 to 173 (SLIS…TFAS). Asparagine 80, asparagine 85, and asparagine 117 each carry an N-linked (GlcNAc...) asparagine glycan. The LRRCT domain maps to 185-247 (NPFNCECDLF…ITVLQAKCRN (63 aa)). Asparagine 205 and asparagine 247 each carry an N-linked (GlcNAc...) asparagine glycan. Positions 249–294 (SMPARPVSHPTPYSTDAQREPDENSGFNPDEILSVEPPASSTTDAS) are disordered. The 88-residue stretch at 292-379 (DASAGPAIKL…FNHTCLTFTT (88 aa)) folds into the Fibronectin type-III domain. The chain crosses the membrane as a helical span at residues 398 to 418 (IMTILGCLFGMVIVLGAVYYC). Residues 419 to 823 (LRKRRMQEEK…WKGVSAQQKL (405 aa)) lie on the Cytoplasmic side of the membrane. Positions 590–624 (ASSAATPGALERPSFLSPPYKESSHHPLQRQLSAD) are disordered. Residues serine 622, serine 671, and serine 675 each carry the phosphoserine modification.

As to quaternary structure, interacts with PPP1CA.

Its subcellular location is the membrane. Inhibits phosphatase activity of protein phosphatase 1 (PP1) complexes. The chain is Protein phosphatase 1 regulatory subunit 29 (Elfn2) from Mus musculus (Mouse).